A 123-amino-acid chain; its full sequence is Small ribosomal subunit protein uS12 (123 aa).

A disordered region spans residues 1–26 (MPTINQLVRKPRKSRSSLNKAPALQH). 3-methylthioaspartic acid is present on Asp90.

Belongs to the universal ribosomal protein uS12 family. In terms of assembly, part of the 30S ribosomal subunit. Contacts proteins S8 and S17. May interact with IF1 in the 30S initiation complex.

In terms of biological role, with S4 and S5 plays an important role in translational accuracy. Interacts with and stabilizes bases of the 16S rRNA that are involved in tRNA selection in the A site and with the mRNA backbone. Located at the interface of the 30S and 50S subunits, it traverses the body of the 30S subunit contacting proteins on the other side and probably holding the rRNA structure together. The combined cluster of proteins S8, S12 and S17 appears to hold together the shoulder and platform of the 30S subunit. The sequence is that of Small ribosomal subunit protein uS12 from Ehrlichia chaffeensis (strain ATCC CRL-10679 / Arkansas).